A 173-amino-acid chain; its full sequence is Translation initiation factor IF-3 (173 aa).

The protein belongs to the IF-3 family. In terms of assembly, monomer.

It is found in the cytoplasm. In terms of biological role, IF-3 binds to the 30S ribosomal subunit and shifts the equilibrium between 70S ribosomes and their 50S and 30S subunits in favor of the free subunits, thus enhancing the availability of 30S subunits on which protein synthesis initiation begins. This is Translation initiation factor IF-3 from Parvibaculum lavamentivorans (strain DS-1 / DSM 13023 / NCIMB 13966).